We begin with the raw amino-acid sequence, 92 residues long: Small ribosomal subunit protein uS19 (92 aa).

This sequence belongs to the universal ribosomal protein uS19 family.

In terms of biological role, protein S19 forms a complex with S13 that binds strongly to the 16S ribosomal RNA. The sequence is that of Small ribosomal subunit protein uS19 from Rickettsia felis (strain ATCC VR-1525 / URRWXCal2) (Rickettsia azadi).